The following is a 475-amino-acid chain: Cysteine--tRNA ligase (475 aa).

Residue Cys28 participates in Zn(2+) binding. The 'HIGH' region motif lies at 30–40 (PTVYDETHIGH). Residues Cys208, His233, and Glu237 each contribute to the Zn(2+) site. Positions 265 to 269 (KMSKS) match the 'KMSKS' region motif. ATP is bound at residue Lys268.

This sequence belongs to the class-I aminoacyl-tRNA synthetase family. Zn(2+) serves as cofactor.

The protein localises to the cytoplasm. The catalysed reaction is tRNA(Cys) + L-cysteine + ATP = L-cysteinyl-tRNA(Cys) + AMP + diphosphate. The sequence is that of Cysteine--tRNA ligase from Methanococcus vannielii (strain ATCC 35089 / DSM 1224 / JCM 13029 / OCM 148 / SB).